A 212-amino-acid chain; its full sequence is uncharacterized protein (212 aa).

It belongs to the methyltransferase superfamily.

This is an uncharacterized protein from Synechocystis sp. (strain ATCC 27184 / PCC 6803 / Kazusa).